Reading from the N-terminus, the 90-residue chain is Bombyxin B-5 (90 aa).

The signal sequence occupies residues 1–20 (MMKTAVMFILVVVISLTYSS). Intrachain disulfides connect Cys-30-Cys-75, Cys-42-Cys-88, and Cys-74-Cys-79. The propeptide at 49-64 (GGAQYAPYWQETYLRS) is c peptide like.

It belongs to the insulin family. As to quaternary structure, heterodimer of a B chain and an A chain linked by two disulfide bonds.

Its subcellular location is the secreted. Its function is as follows. Brain peptide responsible for activation of prothoracic glands to produce ecdysone in insects. The sequence is that of Bombyxin B-5 (BBXB5) from Bombyx mori (Silk moth).